We begin with the raw amino-acid sequence, 301 residues long: 4-diphosphocytidyl-2-C-methyl-D-erythritol kinase (301 aa).

Lys-18 is a catalytic residue. Pro-103 to Ala-113 provides a ligand contact to ATP. The active site involves Asp-145.

This sequence belongs to the GHMP kinase family. IspE subfamily.

The catalysed reaction is 4-CDP-2-C-methyl-D-erythritol + ATP = 4-CDP-2-C-methyl-D-erythritol 2-phosphate + ADP + H(+). Its pathway is isoprenoid biosynthesis; isopentenyl diphosphate biosynthesis via DXP pathway; isopentenyl diphosphate from 1-deoxy-D-xylulose 5-phosphate: step 3/6. Catalyzes the phosphorylation of the position 2 hydroxy group of 4-diphosphocytidyl-2C-methyl-D-erythritol. The chain is 4-diphosphocytidyl-2-C-methyl-D-erythritol kinase from Bradyrhizobium sp. (strain BTAi1 / ATCC BAA-1182).